The following is a 131-amino-acid chain: Small ribosomal subunit protein uS11 (131 aa).

Belongs to the universal ribosomal protein uS11 family. Part of the 30S ribosomal subunit. Interacts with proteins S7 and S18. Binds to IF-3.

Its function is as follows. Located on the platform of the 30S subunit, it bridges several disparate RNA helices of the 16S rRNA. Forms part of the Shine-Dalgarno cleft in the 70S ribosome. The sequence is that of Small ribosomal subunit protein uS11 from Trichormus variabilis (strain ATCC 29413 / PCC 7937) (Anabaena variabilis).